The following is a 93-amino-acid chain: Small ribosomal subunit protein uS19 (93 aa).

Residues 1–23 form a disordered region; sequence MPRSLKKGPFVDDHLQKKVDAEN. The span at 9–23 shows a compositional bias: basic and acidic residues; that stretch reads PFVDDHLQKKVDAEN.

This sequence belongs to the universal ribosomal protein uS19 family.

In terms of biological role, protein S19 forms a complex with S13 that binds strongly to the 16S ribosomal RNA. In Nocardioides sp. (strain ATCC BAA-499 / JS614), this protein is Small ribosomal subunit protein uS19.